Reading from the N-terminus, the 348-residue chain is LRP2-binding protein (348 aa).

The stretch at 60 to 93 (TLAYFLRGQLYFEEGWYEEALEQFEEIEEKDHQA) is one TPR repeat. Sel1-like repeat units lie at residues 94 to 126 (TYQLGVMYYDGLGTILNSEKGVDYMKKILDSPC), 134 to 169 (FAAAYNLGRAYYEGKGVKRSNEEAERLWLFAADNGN), 174 to 207 (VKAQSMLGLYYSTKEPKELEKAFYWHSEACGNGN), 208 to 243 (LESQGALGLMYLYGQGIRQDTEAALHCLREAAERGN), 244 to 278 (VYAQGNLVEYYYKMKFFTKCVAFSKRIADYDEVHD), and 298 to 333 (AMASFYHARCLQLGLGITRDEATAKHYYSKACRLNP).

In terms of assembly, interacts with LRP2.

It is found in the cytoplasm. May act as an adapter that regulates LRP2 function. This Macaca fascicularis (Crab-eating macaque) protein is LRP2-binding protein (LRP2BP).